The sequence spans 345 residues: DLICTGITSSNSPHVVKTATQGEVNVTGVIPLTTTPTKSHFANLKGTKTRGKLCPNCLNCTDLDVALGRPKCMGTIPSAKASILHEVKPVTSGCFPIMHDRTKIRQLPNLLRGYENIRLSTRNVINAEWAPGGPYKIGTSGSCPNVTNGNGFFATMAWAVPKDNKTATDPLTVEVPYICTKGEDQITVWGFHSDNEAQMVKLYGDSKPQKFTSSANGVTTHYVSQIGGFPNQTEDGGIPQSGRIVVDYMVQKPGKTGTIVYQRGVLLPQKVWCASGRSKVIKGSLPLIGEADCLHEKYGGLNKSKPYYTGEHAKAIGNCPIWVKTPLKLANGTKYRPPAKLLKER.

Residues asparagine 25, asparagine 59, asparagine 145, asparagine 164, asparagine 231, asparagine 302, and asparagine 331 are each glycosylated (N-linked (GlcNAc...) asparagine; by host).

The protein belongs to the influenza viruses hemagglutinin family. Homotrimer of disulfide-linked HA1-HA2. Post-translationally, in natural infection, inactive HA is matured into HA1 and HA2 outside the cell by one or more trypsin-like, arginine-specific endoprotease secreted by the bronchial epithelial cells. One identified protease that may be involved in this process is secreted in lungs by club cells. In terms of processing, palmitoylated.

It localises to the virion membrane. It is found in the host apical cell membrane. Its function is as follows. Binds to sialic acid-containing receptors on the cell surface, bringing about the attachment of the virus particle to the cell. Plays a major role in the determination of host range restriction and virulence. Class I viral fusion protein. Responsible for penetration of the virus into the cell cytoplasm by mediating the fusion of the membrane of the endocytosed virus particle with the endosomal membrane. Low pH in endosomes induce an irreversible conformational change in HA2, releasing the fusion hydrophobic peptide. Several trimers are required to form a competent fusion pore. This Homo sapiens (Human) protein is Hemagglutinin (HA).